The primary structure comprises 7124 residues: Replicase polyprotein 1ab (7124 aa).

Residues 25–45 (SEKLGSPERSEEDGFCPSAAQ) are disordered. The CoV Nsp1 globular domain maps to 54-196 (LINHVRVDCS…PWSILLRKGG (143 aa)). One can recognise a BetaCoV Nsp1 C-terminal domain in the interval 217-247 (FNVEDACEEVHLNPKGKYSRKAYALLKGYRG). The region spanning 251-511 (ILFLDQYGCD…TDAICRSLYM (261 aa)) is the CoV Nsp2 N-terminal domain. Zn(2+) is bound by residues cysteine 390, cysteine 395, cysteine 411, and cysteine 414. The segment at 390-414 (CCGDACDFRGWVPGNMMDGFLCPGC) is C4. In terms of domain architecture, CoV Nsp2 middle spans 518–706 (CGNLEQRAIL…VDKFKVFFKV (189 aa)). One can recognise a CoV Nsp2 C-terminal domain in the interval 726–832 (SNRVCLAGCK…LDQCWRFPCA (107 aa)). A Ubiquitin-like 1 domain is found at 834–946 (KKVEFNDKPK…MYCSFSAPDD (113 aa)). A Peptidase C16 1 domain is found at 1031-1268 (AFDAIYSEAL…IAQLYGSCIT (238 aa)). Cysteine 1068 serves as the catalytic For PL1-PRO activity. Zn(2+) is bound by residues cysteine 1145, cysteine 1148, cysteine 1171, and cysteine 1173. A C4-type 1 zinc finger spans residues 1145-1173 (CLKCDMDLKLQGLDAMFFYGDVVSHVCKC). Catalysis depends on for PL1-PRO activity residues histidine 1219 and aspartate 1230. A Macro domain is found at 1269–1429 (PNVCFVKGDV…VIEKCQVTSI (161 aa)). One can recognise a DPUP domain in the interval 1484–1556 (DDARVFVQAH…VSQIRALLAN (73 aa)). A Ubiquitin-like 2 domain is found at 1555 to 1610 (ANKVDVLCTVDGVNFRSCCVAEGEVFGKTLGSVFCDGINVTKVRCSAIHKGKVFFQ). The region spanning 1625-1884 (AFGFDEPQLL…CVEYNPDLSQ (260 aa)) is the Peptidase C16 2 domain. Catalysis depends on cysteine 1663, which acts as the For PL2-PRO activity. 4 residues coordinate Zn(2+): cysteine 1741, cysteine 1743, cysteine 1775, and cysteine 1777. The C4-type 2 zinc finger occupies 1741 to 1777 (CKCGVKQEQRKGVDAVMHFGTLDKGDLAKGYTIACTC). Catalysis depends on for PL2-PRO activity residues histidine 1820 and aspartate 1834. Positions 1898–1999 (IKAQFRTFEK…TYFNRPSVVC (102 aa)) constitute a Nucleic acid-binding domain. A G2M domain is found at 2053–2202 (QVVSGFLSDL…TDNKVIYTTE (150 aa)). A run of 2 helical transmembrane segments spans residues 2232–2252 (FFLVATVFLLWFNFLYANVIL) and 2260–2280 (IGFFPTFVGQIVAWVKTTFGI). Residues 2232–2408 (FFLVATVFLL…FTLLRFYIVV (177 aa)) are HD1. A 3Ecto domain is found at 2268 to 2329 (GQIVAWVKTT…AINVVQHVVD (62 aa)). 2 disulfides stabilise this stretch: cysteine 2284–cysteine 2308 and cysteine 2299–cysteine 2305. The next 2 membrane-spanning stretches (helical) occupy residues 2346 to 2366 (LVIGYSLYTVCFYPLFGLIGM) and 2388 to 2408 (FFVFVANMLPAFTLLRFYIVV). The Y1 stretch occupies residues 2416–2506 (CLCRHVMYGC…ELKRPVNPTD (91 aa)). In terms of domain architecture, CoV Nsp3 Y spans 2416–2783 (CLCRHVMYGC…LTTPFSLKGG (368 aa)). 8 residues coordinate Zn(2+): histidine 2420, cysteine 2425, cysteine 2430, cysteine 2433, cysteine 2466, histidine 2469, cysteine 2473, and cysteine 2476. Positions 2420 to 2433 (HVMYGCSRPGCLFC) are ZF1. Positions 2466–2476 (CAKHQWNCLNC) are ZF2. Residues 2507–2599 (SAYYLVTEVK…LVEKKLITTA (93 aa)) form a Y2 region. Positions 2507 to 2783 (SAYYLVTEVK…LTTPFSLKGG (277 aa)) are coV-Y. The interval 2600–2682 (NTGLSVSQTM…KSIMSAVNAG (83 aa)) is Y3. The segment at 2683–2783 (VDFTDESCNN…LTTPFSLKGG (101 aa)) is Y4. The next 7 helical transmembrane spans lie at 2789-2809 (VLQWLFVVNLICFIVLWALMP), 2869-2889 (ACPVVVAVIDQDIGYTLFNVP), 3042-3062 (AFDLIHQVLGGLVRPIDFFAL), 3064-3084 (ASSVAGAILAIIVVLAFYYLI), 3096-3116 (VVVINVIVWCINFLMLFVFQV), 3123-3143 (LYACFYFYTTLYFPSEISVVM), and 3148-3168 (LVMYGAIMPLWFCIIYVAVVV). Residues 2789 to 3168 (VLQWLFVVNL…FCIIYVAVVV (380 aa)) are HD2. Residues 3182–3279 (LGTEVRSDGT…TASVTTSFLQ (98 aa)) form the Nsp4C domain. One can recognise a Peptidase C30 domain in the interval 3280–3582 (SGIVKMVFPT…YQQLAGVKLQ (303 aa)). Catalysis depends on for 3CL-PRO activity residues histidine 3320 and cysteine 3424. The segment at 3525-3808 (LVLDALASMT…VCCCYWGVLS (284 aa)) is HD3. The next 7 membrane-spanning stretches (helical) occupy residues 3591–3611 (GTCCWILASTLLFCSIISAFV), 3621–3641 (THMLGVTLCALCFVSFAMLLV), 3647–3667 (YLTMFIMPVLCTLFYTNYLVV), 3690–3710 (TYMDEVLYGVVLLVAMVFVTM), 3717–3737 (VFSVMFLVGRLVSLVSMWYFG), 3744–3764 (VLLFLTSLFGTYTWTTMLSLA), and 3788–3808 (LVLLSYLCIGYVCCCYWGVLS). Residues 3870 to 3958 (SRLTDVKCVN…DYVRDSTVLQ (89 aa)) form the RdRp Nsp7 cofactor domain. The region spanning 3959-4155 (ALQSEFVNMA…HNEVSSVVLQ (197 aa)) is the RdRp Nsp8 cofactor domain. In terms of domain architecture, Nsp9 ssRNA-binding spans 4156–4265 (NNELMPQKLR…GTLSSTVRLQ (110 aa)). In terms of domain architecture, ExoN/MTase coactivator spans 4266 to 4403 (AGTATEYASN…CVGTGSQFQS (138 aa)). Residues cysteine 4339, cysteine 4342, histidine 4348, cysteine 4355, cysteine 4381, cysteine 4384, cysteine 4392, and cysteine 4394 each coordinate Zn(2+). Zinc fingers lie at residues 4339 to 4355 (CIYCRSRVEHPDVDGLC) and 4381 to 4394 (CQVCGFWRDGSCSC). In terms of domain architecture, NiRAN spans 4408 to 4663 (FLNRVRGTSV…DSELFINGTY (256 aa)). Residues asparagine 4611 and aspartate 4620 each coordinate Mn(2+). Residues 4664–4762 (REFDLVQYDF…MNMDVDTHRY (99 aa)) form the Nsp12 Interface domain. Positions 4693, 4699, 4704, 4708, and 4885 each coordinate Zn(2+). A Nsp12 RNA-dependent RNA polymerase domain is found at 4763 to 5330 (RLSLKDLLLY…NMYLRSAVMQ (568 aa)). Residues 4765 to 4979 (SLKDLLLYAA…HQKCLKSIAA (215 aa)) form a rdRp Fingers N-ter region. Residues 4980 to 5018 (TRGVPVVIGTTKFYGGWDDMLRRLIKDVDSPVLMGWDYP) are rdRp Palm N-ter. One can recognise a RdRp catalytic domain in the interval 5010–5172 (PVLMGWDYPK…CYNSEFASKG (163 aa)). The interval 5019–5077 (KCDRAMPNILRIISSLVLARKHDSCCSHTDRFYRLANECAQVLSEIVMCGGCYYVKPGG) is rdRp Fingers C-ter. Histidine 5040, cysteine 5043, and cysteine 5044 together coordinate Zn(2+). The interval 5078 to 5213 (TSSGDATTAF…EKGPHEFCSQ (136 aa)) is rdRp Palm C-ter. Active-site residues include serine 5157, aspartate 5158, and aspartate 5159. The segment at 5214–5330 (HTMLVKMDGD…NMYLRSAVMQ (117 aa)) is rdRp Thumb. The 113-residue stretch at 5331 to 5443 (SVGACVVCSS…EDFNKIASCK (113 aa)) folds into the CV ZBD domain. Residues cysteine 5335, cysteine 5338, cysteine 5346, cysteine 5349, cysteine 5356, cysteine 5359, histidine 5363, histidine 5369, cysteine 5380, cysteine 5385, cysteine 5402, and histidine 5405 each coordinate Zn(2+). Positions 5586-5767 (SVPETFQNNV…MCCLGPDIFL (182 aa)) constitute a (+)RNA virus helicase ATP-binding domain. Position 5611–5618 (5611–5618 (GPPGTGKS)) interacts with ATP. Positions 5768 to 5937 (GTCYRCPKEI…RLQCTTNLFK (170 aa)) constitute a (+)RNA virus helicase C-terminal domain. In terms of domain architecture, ExoN spans 6001–6216 (LFITRDEAIR…RCLAVHDCFC (216 aa)). Catalysis depends on residues aspartate 6019, glutamate 6021, and glutamate 6120. Zn(2+) contacts are provided by cysteine 6136, cysteine 6139, cysteine 6155, histidine 6158, histidine 6186, cysteine 6190, and histidine 6193. Residues histidine 6197 and aspartate 6202 contribute to the active site. Cysteine 6208 serves as a coordination point for Zn(2+). In terms of domain architecture, N7-MTase spans 6225-6451 (YPIISNEVSV…NLWNTFTRLQ (227 aa)). 6260–6266 (DIGNPKG) serves as a coordination point for S-adenosyl-L-methionine. The segment at 6338-6352 (CNGGSLYVNKHAFHT) is gpppA-binding. Positions 6376, 6397, 6408, and 6411 each coordinate Zn(2+). The 61-residue stretch at 6452–6512 (SLENVVYNLV…NVAVELFAKR (61 aa)) folds into the Nsp15 N-terminal oligomerization domain. The AV-Nsp11N/CoV-Nsp15M domain occupies 6513 to 6633 (SIRPHPELKL…FAMRRDGDDV (121 aa)). The region spanning 6683–6822 (APRSEMEKDF…NEEKVMTFYP (140 aa)) is the NendoU domain. Residues histidine 6713, histidine 6728, lysine 6768, lysine 6871, aspartate 6955, lysine 6995, and glutamate 7028 contribute to the active site. Positions 6827-7121 (AADWKPGYVM…KEVFVGDSLV (295 aa)) constitute a Nidovirus-type SAM-dependent 2'-O-MTase domain.

It belongs to the coronaviruses polyprotein 1ab family. In terms of assembly, interacts with host PHB and PHB2. As to quaternary structure, interacts with papain-like protease nsp3 and non-structural protein 6. Monomer. Homodimer. Only the homodimer shows catalytic activity. In terms of assembly, interacts with nsp8 and nsp12 to form the replication-transcription complex (RTC): nsp12, nsp7, two subunits of nsp8, and up to two subunits of nsp13. As to quaternary structure, interacts with nsp7, nsp13 and nsp12 to form the replication-transcription complex (RTC): nsp12, nsp7, two subunits of nsp8, and up to two subunits of nsp13. Interacts with nsp12. In terms of assembly, interacts with proofreading exoribonuclease nsp14 and 2'-O-methyltransferase nsp16; these interactions enhance nsp14 and nsp16 enzymatic activities. As to quaternary structure, interacts with nsp7 and nsp8 to form the replication-transcription complex (RTC): nsp12, nsp7, two subunits of nsp8, and up to two subunits of nsp13. Interacts with nsp9. Interacts with nsp8 to form the replication-transcription complex (RTC): nsp12, nsp7, two subunits of nsp8, and up to two subunits of nsp13. Mn(2+) serves as cofactor. It depends on Mg(2+) as a cofactor. Specific enzymatic cleavages in vivo by its own proteases yield mature proteins. 3CL-PRO and PL-PRO proteinases are autocatalytically processed.

It is found in the host membrane. The protein resides in the host cytoplasm. The protein localises to the host perinuclear region. It localises to the host endoplasmic reticulum-Golgi intermediate compartment. It catalyses the reaction RNA(n) + a ribonucleoside 5'-triphosphate = RNA(n+1) + diphosphate. The enzyme catalyses ATP + H2O = ADP + phosphate + H(+). The catalysed reaction is Thiol-dependent hydrolysis of ester, thioester, amide, peptide and isopeptide bonds formed by the C-terminal Gly of ubiquitin (a 76-residue protein attached to proteins as an intracellular targeting signal).. It carries out the reaction a 5'-end (N(7)-methyl 5'-triphosphoguanosine)-ribonucleoside in mRNA + S-adenosyl-L-methionine = a 5'-end (N(7)-methyl 5'-triphosphoguanosine)-(2'-O-methyl-ribonucleoside) in mRNA + S-adenosyl-L-homocysteine + H(+). It catalyses the reaction uridylyl-uridylyl-ribonucleotide-RNA = a 3'-end uridylyl-2',3'-cyclophospho-uridine-RNA + a 5'-end dephospho-ribonucleoside-RNA. The enzyme catalyses a 5'-end diphospho-ribonucleoside in mRNA + GTP + H(+) = a 5'-end (5'-triphosphoguanosine)-ribonucleoside in mRNA + diphosphate. The catalysed reaction is a 5'-end (5'-triphosphoguanosine)-ribonucleoside in mRNA + S-adenosyl-L-methionine = a 5'-end (N(7)-methyl 5'-triphosphoguanosine)-ribonucleoside in mRNA + S-adenosyl-L-homocysteine. Functionally, the replicase polyprotein of coronaviruses is a multifunctional protein: it contains the activities necessary for the transcription of negative stranded RNA, leader RNA, subgenomic mRNAs and progeny virion RNA as well as proteinases responsible for the cleavage of the polyprotein into functional products. Its function is as follows. Inhibits host translation by interacting with the 40S ribosomal subunit. The nsp1-40S ribosome complex further induces an endonucleolytic cleavage near the 5'UTR of host mRNAs, targeting them for degradation. Viral mRNAs are not susceptible to nsp1-mediated endonucleolytic RNA cleavage thanks to the presence of a 5'-end leader sequence and are therefore protected from degradation. By suppressing host gene expression, nsp1 facilitates efficient viral gene expression in infected cells and evasion from host immune response. In terms of biological role, may play a role in the modulation of host cell survival signaling pathway by interacting with host PHB and PHB2. Indeed, these two proteins play a role in maintaining the functional integrity of the mitochondria and protecting cells from various stresses. Responsible for the cleavages located at the N-terminus of the replicase polyprotein. In addition, PL-PRO possesses a deubiquitinating/deISGylating activity and processes both 'Lys-48'- and 'Lys-63'-linked polyubiquitin chains from cellular substrates. Participates together with nsp4 in the assembly of virally-induced cytoplasmic double-membrane vesicles necessary for viral replication. Antagonizes innate immune induction of type I interferon by blocking the phosphorylation, dimerization and subsequent nuclear translocation of host IRF3. Also prevents host NF-kappa-B signaling. Functionally, participates in the assembly of virally-induced cytoplasmic double-membrane vesicles necessary for viral replication. Its function is as follows. Cleaves the C-terminus of replicase polyprotein at 11 sites. Recognizes substrates containing the core sequence [ILMVF]-Q-|-[SGACN]. Also able to bind an ADP-ribose-1''-phosphate (ADRP). In terms of biological role, plays a role in the initial induction of autophagosomes from host endoplasmic reticulum. Later, limits the expansion of these phagosomes that are no longer able to deliver viral components to lysosomes. Forms a hexadecamer with nsp8 (8 subunits of each) that may participate in viral replication by acting as a primase. Alternatively, may synthesize substantially longer products than oligonucleotide primers. Functionally, forms a hexadecamer with nsp7 (8 subunits of each) that may participate in viral replication by acting as a primase. Alternatively, may synthesize substantially longer products than oligonucleotide primers. Its function is as follows. Forms a primer, NSP9-pU, which is utilized by the polymerase for the initiation of RNA chains. Interacts with ribosome signal recognition particle RNA (SRP). Together with NSP8, suppress protein integration into the cell membrane, thereby disrupting host immune defenses. In terms of biological role, plays a pivotal role in viral transcription by stimulating both nsp14 3'-5' exoribonuclease and nsp16 2'-O-methyltransferase activities. Therefore plays an essential role in viral mRNAs cap methylation. RNA-directed RNA polymerase that catalyzes the transcription of viral genomic and subgenomic RNAs. Acts in complex with nsp7 and nsp8 to transcribe both the minus and positive strands of genomic RNA. The kinase-like NiRAN domain of NSP12 attaches one or more nucleotides to the amino terminus of NSP9, forming a covalent RNA-protein intermediate that serves as transcription/replication primer. Subgenomic RNAs (sgRNAs) are formed by discontinuous transcription: The polymerase has the ability to pause at transcription-regulating sequences (TRS) and jump to the leader TRS, resulting in a major deletion. This creates a series of subgenomic RNAs that are replicated, transcribed and translated. In addition, Nsp12 is a subunit of the viral RNA capping enzyme that catalyzes the RNA guanylyltransferase reaction for genomic and sub-genomic RNAs. Subsequently, the NiRAN domain transfers RNA to GDP, and forms the core cap structure GpppA-RNA. Functionally, multi-functional protein with a zinc-binding domain in N-terminus displaying RNA and DNA duplex-unwinding activities with 5' to 3' polarity. Activity of helicase is dependent on magnesium. Its function is as follows. Plays a role in viral RNA synthesis through two distinct activities. The N7-guanine methyltransferase activity plays a role in the formation of the cap structure GpppA-RNA. The proofreading exoribonuclease reduces the sensitivity of the virus to RNA mutagens during replication. This activity acts on both ssRNA and dsRNA in a 3'-5' direction. In terms of biological role, plays a role in viral transcription/replication and prevents the simultaneous activation of host cell dsRNA sensors, such as MDA5/IFIH1, OAS, and PKR. Acts by degrading the 5'-polyuridines generated during replication of the poly(A) region of viral genomic and subgenomic RNAs. Catalyzes a two-step reaction in which a 2'3'-cyclic phosphate (2'3'-cP) is first generated by 2'-O transesterification, which is then hydrolyzed to a 3'-phosphate (3'-P). If not degraded, poly(U) RNA would hybridize with poly(A) RNA tails and activate host dsRNA sensors. Methyltransferase that mediates mRNA cap 2'-O-ribose methylation to the 5'-cap structure of viral mRNAs. N7-methyl guanosine cap is a prerequisite for binding of nsp16. Therefore plays an essential role in viral mRNAs cap methylation which is essential to evade immune system. In Murine coronavirus (strain 2) (MHV-2), this protein is Replicase polyprotein 1ab (rep).